Consider the following 496-residue polypeptide: Aspartyl/glutamyl-tRNA(Asn/Gln) amidotransferase subunit B (496 aa).

Belongs to the GatB/GatE family. GatB subfamily. Heterotrimer of A, B and C subunits.

The catalysed reaction is L-glutamyl-tRNA(Gln) + L-glutamine + ATP + H2O = L-glutaminyl-tRNA(Gln) + L-glutamate + ADP + phosphate + H(+). It catalyses the reaction L-aspartyl-tRNA(Asn) + L-glutamine + ATP + H2O = L-asparaginyl-tRNA(Asn) + L-glutamate + ADP + phosphate + 2 H(+). Functionally, allows the formation of correctly charged Asn-tRNA(Asn) or Gln-tRNA(Gln) through the transamidation of misacylated Asp-tRNA(Asn) or Glu-tRNA(Gln) in organisms which lack either or both of asparaginyl-tRNA or glutaminyl-tRNA synthetases. The reaction takes place in the presence of glutamine and ATP through an activated phospho-Asp-tRNA(Asn) or phospho-Glu-tRNA(Gln). In Picosynechococcus sp. (strain ATCC 27264 / PCC 7002 / PR-6) (Agmenellum quadruplicatum), this protein is Aspartyl/glutamyl-tRNA(Asn/Gln) amidotransferase subunit B.